The following is a 1030-amino-acid chain: MTTGRNNRVMMEGVGARVIRGPDWKWGKQDGGEGHVGTVRSFESPEEVVVVWDNGTAANYRCSGAYDVRILDSAPTGIKHDGTMCDTCRQQPIIGIRWKCAECTNYDLCTTCYHGDKHHLRHRFYRITTPGSERVLLESRRKSKKITARGIFAGGRVVRGVDWQWEDQDGGNGRRGKVTEIQDWSAASPHSAAYVLWDNGAKNLYRVGFEGMSDLKCVQDAKGGTFYRDHCPVLGEQNGNRNPGGLQIGDLVNIDLDLEIVQSLQHGHGGWTDGMFETLTTTGTVCGIDEDHDIVVQYPSGNRWTFNPAVLTKANVVRSGEVAAGAEGGSSQFMVGDLVQICYDIDRIKLLQRGHGEWAEAMLPTLGKVGRVQQIYSDSDLKVEVCGTSWTYNPAAVTKVAPAGSAVTNASGERLSQLLKKLFETQESGDINEELVKAAANGDLAKVEDILKRPDVDVNGQCAGHTAMQAASQNGHVDVLKLLLKHSVDLEAEDKDGDRAVHHASFGDEGSVIEVLHRGGADLNARNKRRQTPLHIAVNKGHLQVVKTLLDFGCHPSLQDSEGDTPLHDAISKKRDDMLSVLLEAGADVTITNNNGFNALHHAALRGNPSAMRVLLSKLPRPWIVDEKKDDGYTALHLAALNNHVEVAELLVHQGNANLDVQNVNQQTALHLAVERQHTQIVRLLVRAEAKLDVQDKDGDTPLHEALRHHTLSQLRQLQDMQDVSKVEPWEPSKNTLIMGLGTQGAEKKSAASIACFLAANGADLTIRNKKGQSPLDLCPDPSLCKALAKCHKEKTSGQVGSRSPSLNSNNETLEECMVCSDMKRDTLFGPCGHIATCSLCSPRVKKCLICKEQVQSRTKIEECVVCSDKKAAVLFQPCGHMCACENCASLMKKCVQCRAVVERRTPFVLCCGGKGMEDATDDEDLTGGSNSMAGGSQDLLQPNNLALSWSSGNIPALQRDKDNTNVNADVQKLQQQLQDIKEQTMCPVCLDRLKNMIFMCGHGTCQLCGDRMSECPICRKAIERRILLY.

The MIB/HERC2 1 domain occupies 6 to 74 (NNRVMMEGVG…AYDVRILDSA (69 aa)). The segment at 80–132 (HDGTMCDTCRQQPIIGIRWKCAECTNYDLCTTCYHGDKHHLRHRFYRITTPGS) adopts a ZZ-type zinc-finger fold. Zn(2+) contacts are provided by Cys85, Cys88, Cys100, Cys103, Cys109, Cys112, His118, and His122. Positions 143 to 221 (SKKITARGIF…MSDLKCVQDA (79 aa)) constitute an MIB/HERC2 2 domain. 9 ANK repeats span residues 430–460 (DINEELVKAAANGDLAKVEDILKRPDVDVNG), 463–492 (AGHTAMQAASQNGHVDVLKLLLKHSVDLEA), 496–525 (DGDRAVHHASFGDEGSVIEVLHRGGADLNA), 529–558 (RRQTPLHIAVNKGHLQVVKTLLDFGCHPSL), 562–591 (EGDTPLHDAISKKRDDMLSVLLEAGADVTI), 595–627 (NGFNALHHAALRGNPSAMRVLLSKLPRPWIVDE), 631–661 (DGYTALHLAALNNHVEVAELLVHQGNANLDV), 665–694 (NQQTALHLAVERQHTQIVRLLVRAEAKLDV), and 698–727 (DGDTPLHEALRHHTLSQLRQLQDMQDVSKV). 2 consecutive RING-type zinc fingers follow at residues 817 to 852 (CMVCSDMKRDTLFGPCGHIATCSLCSPRVKKCLICK) and 864 to 899 (CVVCSDKKAAVLFQPCGHMCACENCASLMKKCVQCR). Positions 957-986 (ALQRDKDNTNVNADVQKLQQQLQDIKEQTM) form a coiled coil. The RING-type 3 zinc finger occupies 987-1020 (CPVCLDRLKNMIFMCGHGTCQLCGDRMSECPICR).

As to quaternary structure, interacts with deltaA (dla) and deltaD (dld).

The protein localises to the cytoplasm. Its subcellular location is the cytoskeleton. It localises to the microtubule organizing center. It is found in the centrosome. The protein resides in the centriolar satellite. The protein localises to the cell membrane. It carries out the reaction S-ubiquitinyl-[E2 ubiquitin-conjugating enzyme]-L-cysteine + [acceptor protein]-L-lysine = [E2 ubiquitin-conjugating enzyme]-L-cysteine + N(6)-ubiquitinyl-[acceptor protein]-L-lysine.. It participates in protein modification; protein ubiquitination. Functionally, E3 ubiquitin-protein ligase that mediates ubiquitination of Delta receptors, which act as ligands of Notch proteins. Positively regulates the Delta-mediated Notch signaling by ubiquitinating the intracellular domain of Delta, leading to endocytosis of Delta receptors. It thereby participates in many processes regulated by the Notch signaling pathway, such as midline cell fate specification prior to germ layer formation, patterning of sensory cell differentiation in the ear, neurogenesis of the hindbrain and commitment to a secretory fate in the intestine. Essential for early embryonic development. This chain is E3 ubiquitin-protein ligase mib1 (mib1), found in Danio rerio (Zebrafish).